Here is a 160-residue protein sequence, read N- to C-terminus: Cathelin-related peptide SC5 (160 aa).

Positions 1–29 are cleaved as a signal peptide; it reads METQRASLSLGRRSLWLLLLGLVLASASA. A propeptide spanning residues 30 to 131 is cleaved from the precursor; it reads QALSYREAVL…DITCAEPQSV (102 aa). Cystine bridges form between C86–C97 and C108–C125.

The protein belongs to the cathelicidin family.

The protein localises to the secreted. Its function is as follows. Broad spectrum bactericidal agent. The sequence is that of Cathelin-related peptide SC5 from Ovis aries (Sheep).